Consider the following 97-residue polypeptide: YcgL domain-containing protein Maqu_1609 (97 aa).

Residues 5–89 (EFVSVFRSSK…EQDTYIVDFK (85 aa)) enclose the YcgL domain.

In Marinobacter nauticus (strain ATCC 700491 / DSM 11845 / VT8) (Marinobacter aquaeolei), this protein is YcgL domain-containing protein Maqu_1609.